The chain runs to 435 residues: Temperature-sensitive sn-2 acyl-lipid omega-3 desaturase (ferredoxin), chloroplastic (435 aa).

The transit peptide at 1–42 (MASSVLSECGFRPLPRFYPKHTTSFASNPKPTFKFNPPLKPP) directs the protein to the chloroplast. A run of 2 helical transmembrane segments spans residues 111–131 (MSYVVRDVAIVFGLAAVAAYF) and 134–154 (WLLWPLYWFAQGTMFWALFVL). The Histidine box-1 signature appears at 156–160 (HDCGH). The Histidine box-2 signature appears at 192 to 196 (HRTHH). The next 2 membrane-spanning stretches (helical) occupy residues 268 to 290 (VLTSTACWTAMAALLVCLNFVMG) and 297 to 319 (LYGIPYWIFVMWLDFVTYLHHHG). Residues 359–363 (HVIHH) carry the Histidine box-3 motif.

The protein belongs to the fatty acid desaturase type 1 family.

It localises to the plastid. The protein resides in the chloroplast membrane. It carries out the reaction a (7Z,10Z)-hexadecadienoyl-containing glycerolipid + 2 reduced [2Fe-2S]-[ferredoxin] + O2 + 2 H(+) = a (7Z,10Z,13Z)-hexadecatrienoyl-containing glycerolipid + 2 oxidized [2Fe-2S]-[ferredoxin] + 2 H2O. The enzyme catalyses a (9Z,12Z)-octadecadienoyl-containing glycerolipid + 2 reduced [2Fe-2S]-[ferredoxin] + O2 + 2 H(+) = (9Z,12Z,15Z)-octadecatrienoyl-containing glycerolipid + 2 oxidized [2Fe-2S]-[ferredoxin] + 2 H2O. It participates in lipid metabolism; polyunsaturated fatty acid biosynthesis. Chloroplast omega-3 fatty acid desaturase introduces the third double bond in the biosynthesis of 16:3 and 18:3 fatty acids, important constituents of plant membranes. It is thought to use ferredoxin as an electron donor and to act on fatty acids esterified to galactolipids, sulfolipids and phosphatidylglycerol. The chain is Temperature-sensitive sn-2 acyl-lipid omega-3 desaturase (ferredoxin), chloroplastic from Arabidopsis thaliana (Mouse-ear cress).